Here is a 100-residue protein sequence, read N- to C-terminus: Putative protein adenylyltransferase MJ1379 (100 aa).

Positions 31–45 match the GSX(10)DXD motif motif; the sequence is GSYARGEQTEESDID. Mg(2+) is bound by residues Asp-43, Asp-45, and Asp-77.

It belongs to the MntA antitoxin family. As to quaternary structure, probably forms a complex with cognate toxin MJ1380. It depends on Mg(2+) as a cofactor.

The enzyme catalyses L-tyrosyl-[protein] + ATP = O-(5'-adenylyl)-L-tyrosyl-[protein] + diphosphate. It carries out the reaction O-(5'-adenylyl)-L-tyrosyl-[protein] + ATP = O-[5'-(adenylyl-(5'-&gt;3')-adenylyl)]-L-tyrosyl-[protein] + diphosphate. In terms of biological role, probable antitoxin component of a putative type VII toxin-antitoxin (TA) system. Neutralizes cognate toxic MJ1380 by di-AMPylation. In Methanocaldococcus jannaschii (strain ATCC 43067 / DSM 2661 / JAL-1 / JCM 10045 / NBRC 100440) (Methanococcus jannaschii), this protein is Putative protein adenylyltransferase MJ1379.